Here is a 164-residue protein sequence, read N- to C-terminus: Crossover junction endodeoxyribonuclease RuvC (164 aa).

Active-site residues include D7, E67, and D140. The Mg(2+) site is built by D7, E67, and D140.

Belongs to the RuvC family. As to quaternary structure, homodimer which binds Holliday junction (HJ) DNA. The HJ becomes 2-fold symmetrical on binding to RuvC with unstacked arms; it has a different conformation from HJ DNA in complex with RuvA. In the full resolvosome a probable DNA-RuvA(4)-RuvB(12)-RuvC(2) complex forms which resolves the HJ. Mg(2+) serves as cofactor.

The protein resides in the cytoplasm. The catalysed reaction is Endonucleolytic cleavage at a junction such as a reciprocal single-stranded crossover between two homologous DNA duplexes (Holliday junction).. Functionally, the RuvA-RuvB-RuvC complex processes Holliday junction (HJ) DNA during genetic recombination and DNA repair. Endonuclease that resolves HJ intermediates. Cleaves cruciform DNA by making single-stranded nicks across the HJ at symmetrical positions within the homologous arms, yielding a 5'-phosphate and a 3'-hydroxyl group; requires a central core of homology in the junction. The consensus cleavage sequence is 5'-(A/T)TT(C/G)-3'. Cleavage occurs on the 3'-side of the TT dinucleotide at the point of strand exchange. HJ branch migration catalyzed by RuvA-RuvB allows RuvC to scan DNA until it finds its consensus sequence, where it cleaves and resolves the cruciform DNA. This chain is Crossover junction endodeoxyribonuclease RuvC, found in Alkaliphilus metalliredigens (strain QYMF).